The primary structure comprises 758 residues: MTSGPFFFCIFIIGKYFTLGSAQDVSCPLGSFPCGNMSRCLPQLLHCNGVDDCGNRADEDHCGDNNGWSLQLDKYFANYYKLASTNSFEAETSECLVGSVPMHCLCRDLELDCDEANLRAVPSVSSNVTVMSLQRNFIRTLPPNGFRKYHELQKLCLQNNRIHSVSVSAFRGLRSLTKLYLSHNRITFLKPGVFEDLHRLEWLIIEDNHLSRISPLTFYGLNSLILLVLMNNALTRLPDKPLCQHMPRLHWLDFEGNRIHNLRNLTFISCNNLTVLVMRKNKINYLNEHAFTHLQKLDELDLGSNKIENLPPNIFKDLKELSQLNISYNPIQKIEVNQFDCLAKLKSLSLEGIEISNIQQRMFRPLINLSHIYFKKFQYCGYAPHVRSCKPNTDGISSLENLLASIIQRVFVWVVSAITCFGNIFVICMRPYIRSENKLHAMSIISLCCADCLMGVYLFVIGAFDLKFRGEYNKHAQPWMESVHCQFMGSLAILSTEVSVLLLTFLTLEKYICIVYPFRCLRPRKCRTITVLIFIWIIGFIVAFAPLGNKEFFKNYYGTNGVCFPLHSEDTGSTGAQIYSVVIFLGINLVAFIIIVFSYGSMFYSVHQSSVTVTEIQKQVKKEVVLAKRFFFIVFTDALCWIPIFILKFLSLLQVEIPDSITSWVVIFILPINSALNPIIYTLTTRPFKEMIHQLWHNYRQRRSVDRKETQKAYAPSFIWVEMWPLQEMSSGFMKPGAFTDPCDLSLVSQSSRLNSYS.

Residues 1 to 409 (MTSGPFFFCI…ENLLASIIQR (409 aa)) lie on the Extracellular side of the membrane. The LDL-receptor class A domain occupies 26–63 (SCPLGSFPCGNMSRCLPQLLHCNGVDDCGNRADEDHCG). 3 disulfide bridges follow: Cys27-Cys40, Cys34-Cys53, and Cys47-Cys62. Asn36 is a glycosylation site (N-linked (GlcNAc...) asparagine). Residues Leu45, Asn48, Val50, Asp52, Asp58, and Glu59 each coordinate Ca(2+). N-linked (GlcNAc...) asparagine glycosylation occurs at Asn127. LRR repeat units lie at residues 127–148 (NVTV…GFRK), 151–172 (ELQK…AFRG), 175–196 (SLTK…VFED), 199–220 (RLEW…TFYG), 223–244 (SLIL…PLCQ), 248–269 (RLHW…TFIS), 272–293 (NLTV…AFTH), 296–317 (KLDE…IFKD), 320–341 (ELSQ…QFDC), and 344–365 (KLKS…MFRP). N-linked (GlcNAc...) asparagine glycans are attached at residues Asn264 and Asn272. A glycan (N-linked (GlcNAc...) asparagine) is linked at Asn325. An N-linked (GlcNAc...) asparagine glycan is attached at Asn368. The chain crosses the membrane as a helical span at residues 410–430 (VFVWVVSAITCFGNIFVICMR). Topologically, residues 431–443 (PYIRSENKLHAMS) are cytoplasmic. Residues 444–464 (IISLCCADCLMGVYLFVIGAF) traverse the membrane as a helical segment. Residues 465–486 (DLKFRGEYNKHAQPWMESVHCQ) are Extracellular-facing. Cys485 and Cys563 are joined by a disulfide. The chain crosses the membrane as a helical span at residues 487–507 (FMGSLAILSTEVSVLLLTFLT). Over 508 to 527 (LEKYICIVYPFRCLRPRKCR) the chain is Cytoplasmic. The chain crosses the membrane as a helical span at residues 528–548 (TITVLIFIWIIGFIVAFAPLG). At 549–577 (NKEFFKNYYGTNGVCFPLHSEDTGSTGAQ) the chain is on the extracellular side. A helical transmembrane segment spans residues 578 to 598 (IYSVVIFLGINLVAFIIIVFS). Residues 599 to 629 (YGSMFYSVHQSSVTVTEIQKQVKKEVVLAKR) are Cytoplasmic-facing. A helical transmembrane segment spans residues 630 to 650 (FFFIVFTDALCWIPIFILKFL). A topological domain (extracellular) is located at residue Ser651. A helical membrane pass occupies residues 652–672 (LLQVEIPDSITSWVVIFILPI). Residues 673–758 (NSALNPIIYT…SQSSRLNSYS (86 aa)) are Cytoplasmic-facing.

Belongs to the G-protein coupled receptor 1 family. As to quaternary structure, interacts with C1QTNF8.

The protein resides in the cell membrane. Receptor for relaxins. The activity of this receptor is mediated by G proteins leading to stimulation of adenylate cyclase and an increase of cAMP. Binding of the ligand may also activate a tyrosine kinase pathway that inhibits the activity of a phosphodiesterase that degrades cAMP. The sequence is that of Relaxin receptor 1 (Rxfp1) from Mus musculus (Mouse).